Reading from the N-terminus, the 670-residue chain is DNA ligase (670 aa).

NAD(+) contacts are provided by residues 32 to 36 (DAEYD), 81 to 82 (SL), and glutamate 111. Lysine 113 serves as the catalytic N6-AMP-lysine intermediate. 4 residues coordinate NAD(+): arginine 134, glutamate 171, lysine 290, and lysine 314. Zn(2+)-binding residues include cysteine 408, cysteine 411, cysteine 426, and cysteine 432. A BRCT domain is found at 591–670 (EEALSLKGQT…DGLLAVLAGE (80 aa)).

This sequence belongs to the NAD-dependent DNA ligase family. LigA subfamily. Mg(2+) serves as cofactor. The cofactor is Mn(2+).

It catalyses the reaction NAD(+) + (deoxyribonucleotide)n-3'-hydroxyl + 5'-phospho-(deoxyribonucleotide)m = (deoxyribonucleotide)n+m + AMP + beta-nicotinamide D-nucleotide.. DNA ligase that catalyzes the formation of phosphodiester linkages between 5'-phosphoryl and 3'-hydroxyl groups in double-stranded DNA using NAD as a coenzyme and as the energy source for the reaction. It is essential for DNA replication and repair of damaged DNA. This chain is DNA ligase, found in Shewanella sediminis (strain HAW-EB3).